We begin with the raw amino-acid sequence, 886 residues long: Alanine--tRNA ligase (886 aa).

4 residues coordinate Zn(2+): histidine 570, histidine 574, cysteine 672, and histidine 676.

The protein belongs to the class-II aminoacyl-tRNA synthetase family. Zn(2+) serves as cofactor.

The protein localises to the cytoplasm. The enzyme catalyses tRNA(Ala) + L-alanine + ATP = L-alanyl-tRNA(Ala) + AMP + diphosphate. Functionally, catalyzes the attachment of alanine to tRNA(Ala) in a two-step reaction: alanine is first activated by ATP to form Ala-AMP and then transferred to the acceptor end of tRNA(Ala). Also edits incorrectly charged Ser-tRNA(Ala) and Gly-tRNA(Ala) via its editing domain. This Acidothermus cellulolyticus (strain ATCC 43068 / DSM 8971 / 11B) protein is Alanine--tRNA ligase.